The sequence spans 368 residues: RAB6-interacting golgin (368 aa).

3 disordered regions span residues Met-1 to Ala-43, Asp-55 to Val-133, and Lys-302 to Thr-368. Residues Glu-11–Arg-27 are compositionally biased toward basic and acidic residues. Residues Ser-80–Leu-89 show a composition bias toward pro residues. Over residues Asn-114 to Val-133 the composition is skewed to basic and acidic residues. Residues Arg-145–Leu-310 are a coiled coil. Residues Ile-188–Thr-368 form a necessary for interaction with RCHY1 region.

The protein belongs to the GORAB family. In terms of assembly, interacts with RCHY1. Interacts with SCYL1 and RAB6A/RAB6. Expressed in small intestine, kidney, skeletal muscle, lung, spleen, brain and heart. High expression is observed in osteoblasts and skin; also expressed in osteoclasts albeit at lower levels.

The protein resides in the cytoplasm. It is found in the golgi apparatus. The chain is RAB6-interacting golgin (Gorab) from Mus musculus (Mouse).